Consider the following 248-residue polypeptide: Small ribosomal subunit protein uS2 (248 aa).

This sequence belongs to the universal ribosomal protein uS2 family.

This chain is Small ribosomal subunit protein uS2, found in Dechloromonas aromatica (strain RCB).